We begin with the raw amino-acid sequence, 73 residues long: Translation initiation factor IF-1 (73 aa).

The 72-residue stretch at 1–72 (MAKEDVIEVE…TKGRITYRFI (72 aa)) folds into the S1-like domain.

Belongs to the IF-1 family. Component of the 30S ribosomal translation pre-initiation complex which assembles on the 30S ribosome in the order IF-2 and IF-3, IF-1 and N-formylmethionyl-tRNA(fMet); mRNA recruitment can occur at any time during PIC assembly.

The protein resides in the cytoplasm. Functionally, one of the essential components for the initiation of protein synthesis. Stabilizes the binding of IF-2 and IF-3 on the 30S subunit to which N-formylmethionyl-tRNA(fMet) subsequently binds. Helps modulate mRNA selection, yielding the 30S pre-initiation complex (PIC). Upon addition of the 50S ribosomal subunit IF-1, IF-2 and IF-3 are released leaving the mature 70S translation initiation complex. The protein is Translation initiation factor IF-1 of Lactobacillus johnsonii (strain CNCM I-12250 / La1 / NCC 533).